The following is a 316-amino-acid chain: Acetaldehyde dehydrogenase (316 aa).

Residue 11–14 participates in NAD(+) binding; the sequence is SGNI. Residue Cys131 is the Acyl-thioester intermediate of the active site. NAD(+)-binding positions include 162-170 and Asn289; that span reads SAGPGTRAN.

Belongs to the acetaldehyde dehydrogenase family. As to quaternary structure, interacts with MhpE.

It carries out the reaction acetaldehyde + NAD(+) + CoA = acetyl-CoA + NADH + H(+). The protein operates within aromatic compound metabolism; 3-phenylpropanoate degradation. In terms of biological role, catalyzes the conversion of acetaldehyde to acetyl-CoA, using NAD(+) and coenzyme A. Is the final enzyme in the meta-cleavage pathway for the degradation of aromatic compounds. The polypeptide is Acetaldehyde dehydrogenase (Klebsiella pneumoniae (strain 342)).